A 291-amino-acid polypeptide reads, in one-letter code: Undecaprenyl-diphosphatase (291 aa).

A run of 8 helical transmembrane segments spans residues 1–21, 48–68, 102–122, 126–146, 162–182, 203–223, 231–251, and 267–287; these read MFII…LTEF, SAFT…AWVF, LHVL…DDFI, LFSV…MIIA, ISYF…WPGF, SDFT…LSLL, IADI…GLIA, and FAIY…GFGI.

This sequence belongs to the UppP family.

The protein localises to the cell membrane. The catalysed reaction is di-trans,octa-cis-undecaprenyl diphosphate + H2O = di-trans,octa-cis-undecaprenyl phosphate + phosphate + H(+). Functionally, catalyzes the dephosphorylation of undecaprenyl diphosphate (UPP). Confers resistance to bacitracin. This chain is Undecaprenyl-diphosphatase, found in Staphylococcus aureus (strain USA300).